Consider the following 61-residue polypeptide: Large ribosomal subunit protein uL30 (61 aa).

This sequence belongs to the universal ribosomal protein uL30 family. In terms of assembly, part of the 50S ribosomal subunit.

This is Large ribosomal subunit protein uL30 from Nitrosomonas europaea (strain ATCC 19718 / CIP 103999 / KCTC 2705 / NBRC 14298).